Consider the following 296-residue polypeptide: Elongation factor Ts (296 aa).

The tract at residues 82–85 (TDFV) is involved in Mg(2+) ion dislocation from EF-Tu.

Belongs to the EF-Ts family.

The protein resides in the cytoplasm. Its function is as follows. Associates with the EF-Tu.GDP complex and induces the exchange of GDP to GTP. It remains bound to the aminoacyl-tRNA.EF-Tu.GTP complex up to the GTP hydrolysis stage on the ribosome. The protein is Elongation factor Ts of Coxiella burnetii (strain CbuK_Q154) (Coxiella burnetii (strain Q154)).